Reading from the N-terminus, the 305-residue chain is Methionyl-tRNA formyltransferase (305 aa).

Position 111-114 (111-114 (SLLP)) interacts with (6S)-5,6,7,8-tetrahydrofolate.

Belongs to the Fmt family.

The enzyme catalyses L-methionyl-tRNA(fMet) + (6R)-10-formyltetrahydrofolate = N-formyl-L-methionyl-tRNA(fMet) + (6S)-5,6,7,8-tetrahydrofolate + H(+). Functionally, attaches a formyl group to the free amino group of methionyl-tRNA(fMet). The formyl group appears to play a dual role in the initiator identity of N-formylmethionyl-tRNA by promoting its recognition by IF2 and preventing the misappropriation of this tRNA by the elongation apparatus. The sequence is that of Methionyl-tRNA formyltransferase from Helicobacter pylori (strain P12).